We begin with the raw amino-acid sequence, 192 residues long: UPF0301 protein BTH_I1462 (192 aa).

It belongs to the UPF0301 (AlgH) family.

This is UPF0301 protein BTH_I1462 from Burkholderia thailandensis (strain ATCC 700388 / DSM 13276 / CCUG 48851 / CIP 106301 / E264).